We begin with the raw amino-acid sequence, 237 residues long: Prospore formation at selected spindle poles protein 1 (237 aa).

Its subcellular location is the nucleus. The protein localises to the cytoplasm. The protein resides in the cytoskeleton. It localises to the microtubule organizing center. It is found in the spindle pole body. In terms of biological role, involved in the pathway that organizes the shaping and sizing of the prospore membrane (PSM) during sporulation. Required to localize MPC54 to all four spindle pole bodies, and localize DON1 and SPO14 to four prospore membranes. The protein is Prospore formation at selected spindle poles protein 1 (PFS1) of Saccharomyces cerevisiae (strain ATCC 204508 / S288c) (Baker's yeast).